Consider the following 302-residue polypeptide: AP-1 complex-associated regulatory protein (302 aa).

Phosphoserine is present on serine 29. An interaction with AP1G1 region spans residues 78–138 (DSIAEKQKDL…ERQRIVQQYH (61 aa)). Residues 80–138 (IAEKQKDLDKKIQKELALQEEKLRLEEEALYAAQREAARAAKQRKLLEQERQRIVQQYH) adopt a coiled-coil conformation. Over residues 188–206 (CDLMTKTKSTSGNDDSTSL) the composition is skewed to polar residues. Residues 188–258 (CDLMTKTKST…TSASDDSNGL (71 aa)) are disordered. The segment at 199–215 (GNDDSTSLDLEWEDEEG) is sufficient for association with the Arp2/3 complex. Residues 221 to 233 (PMRERSKTEEDIL) are compositionally biased toward basic and acidic residues. Position 226 is a phosphoserine (serine 226). Threonine 228 carries the phosphothreonine modification. Residues 242-255 (KKTGSNPTSASDDS) show a composition bias toward polar residues.

In terms of assembly, interacts (via coiled-coil domain) with AP1G1 (via GAE domain). Interacts with KIF5B. Associates with the Arp2/3 complex. In terms of processing, palmitoylated.

The protein localises to the golgi apparatus. The protein resides in the trans-Golgi network. Its subcellular location is the late endosome. It is found in the early endosome. In terms of biological role, necessary for adaptor protein complex 1 (AP-1)-dependent transport between the trans-Golgi network and endosomes. Regulates the membrane association of AP1G1/gamma1-adaptin, one of the subunits of the AP-1 adaptor complex. The direct interaction with AP1G1/gamma1-adaptin attenuates the release of the AP-1 complex from membranes. Regulates endosomal membrane traffic via association with AP-1 and KIF5B thus linking kinesin-based plus-end-directed microtubular transport to AP-1-dependent membrane traffic. May act as effector of AP-1 in calcium-induced endo-lysosome secretion. Inhibits Arp2/3 complex function; negatively regulates cell spreading, size and motility via intracellular sequestration of the Arp2/3 complex. In Homo sapiens (Human), this protein is AP-1 complex-associated regulatory protein (AP1AR).